A 431-amino-acid chain; its full sequence is ORC1-type DNA replication protein 14 (431 aa).

ATP is bound by residues 62–66 (TGKSL), Tyr219, and Arg231.

Belongs to the CDC6/cdc18 family.

Its function is as follows. Involved in regulation of DNA replication. In Haloarcula marismortui (strain ATCC 43049 / DSM 3752 / JCM 8966 / VKM B-1809) (Halobacterium marismortui), this protein is ORC1-type DNA replication protein 14 (cdc6n).